A 124-amino-acid chain; its full sequence is MMNEKILIVDDQYGIRILLNEVFNKEGYQTFQAANGLQALDIVTKERPDLVLLDMKIPGMDGIEILKRMKVIDENIRVIIMTAYGELDMIQESKELGALTHFAKPFDIDEIRDAVKKYLPLKSN.

Residues 5 to 119 (KILIVDDQYG…EIRDAVKKYL (115 aa)) form the Response regulatory domain. 4 residues coordinate Mg(2+): D10, D11, D54, and K56. Residue D54 is modified to 4-aspartylphosphate.

Mg(2+) is required as a cofactor. Post-translationally, phosphorylated by KinA and KinB. Dephosphorylated by RapA and RapB.

Its subcellular location is the cytoplasm. Key element in the phosphorelay regulating sporulation initiation. Phosphorylation of spo0B during sporulation initiation. In Bacillus subtilis (strain 168), this protein is Sporulation initiation phosphotransferase F (spo0F).